We begin with the raw amino-acid sequence, 233 residues long: Phosphoribosylformylglycinamidine synthase subunit PurQ (233 aa).

In terms of domain architecture, Glutamine amidotransferase type-1 spans 3–233; the sequence is SAILVFPGIN…GLVEHLAKAA (231 aa). The active-site Nucleophile is C87. Catalysis depends on residues H204 and E206.

In terms of assembly, part of the FGAM synthase complex composed of 1 PurL, 1 PurQ and 2 PurS subunits.

It localises to the cytoplasm. The catalysed reaction is N(2)-formyl-N(1)-(5-phospho-beta-D-ribosyl)glycinamide + L-glutamine + ATP + H2O = 2-formamido-N(1)-(5-O-phospho-beta-D-ribosyl)acetamidine + L-glutamate + ADP + phosphate + H(+). It catalyses the reaction L-glutamine + H2O = L-glutamate + NH4(+). Its pathway is purine metabolism; IMP biosynthesis via de novo pathway; 5-amino-1-(5-phospho-D-ribosyl)imidazole from N(2)-formyl-N(1)-(5-phospho-D-ribosyl)glycinamide: step 1/2. Part of the phosphoribosylformylglycinamidine synthase complex involved in the purines biosynthetic pathway. Catalyzes the ATP-dependent conversion of formylglycinamide ribonucleotide (FGAR) and glutamine to yield formylglycinamidine ribonucleotide (FGAM) and glutamate. The FGAM synthase complex is composed of three subunits. PurQ produces an ammonia molecule by converting glutamine to glutamate. PurL transfers the ammonia molecule to FGAR to form FGAM in an ATP-dependent manner. PurS interacts with PurQ and PurL and is thought to assist in the transfer of the ammonia molecule from PurQ to PurL. This Rhodopseudomonas palustris (strain BisB18) protein is Phosphoribosylformylglycinamidine synthase subunit PurQ.